Consider the following 461-residue polypeptide: Ribulose bisphosphate carboxylase (461 aa).

Residue N112 coordinates substrate. Catalysis depends on K167, which acts as the Proton acceptor. K169 lines the substrate pocket. Mg(2+) is bound by residues K192, D194, and E195. K192 bears the N6-carboxylysine mark. H288 (proton acceptor) is an active-site residue. 3 residues coordinate substrate: R289, H322, and S369.

It belongs to the RuBisCO large chain family. Type II subfamily. Homodimer. Requires Mg(2+) as cofactor.

It catalyses the reaction 2 (2R)-3-phosphoglycerate + 2 H(+) = D-ribulose 1,5-bisphosphate + CO2 + H2O. It carries out the reaction D-ribulose 1,5-bisphosphate + O2 = 2-phosphoglycolate + (2R)-3-phosphoglycerate + 2 H(+). Its function is as follows. RuBisCO catalyzes two reactions: the carboxylation of D-ribulose 1,5-bisphosphate, the primary event in carbon dioxide fixation, as well as the oxidative fragmentation of the pentose substrate. Both reactions occur simultaneously and in competition at the same active site. The sequence is that of Ribulose bisphosphate carboxylase from Rhodopseudomonas palustris (strain BisB18).